We begin with the raw amino-acid sequence, 225 residues long: 7-cyano-7-deazaguanine synthase (225 aa).

9–19 provides a ligand contact to ATP; it reads LSGGLDSATCL. Zn(2+) is bound by residues cysteine 189, cysteine 199, cysteine 202, and cysteine 205.

It belongs to the QueC family. Zn(2+) is required as a cofactor.

The enzyme catalyses 7-carboxy-7-deazaguanine + NH4(+) + ATP = 7-cyano-7-deazaguanine + ADP + phosphate + H2O + H(+). It participates in purine metabolism; 7-cyano-7-deazaguanine biosynthesis. Catalyzes the ATP-dependent conversion of 7-carboxy-7-deazaguanine (CDG) to 7-cyano-7-deazaguanine (preQ(0)). This is 7-cyano-7-deazaguanine synthase from Dechloromonas aromatica (strain RCB).